The primary structure comprises 146 residues: DNA protection during starvation protein 2 (146 aa).

Residues histidine 27, aspartate 54, and glutamate 58 each coordinate Fe cation.

It belongs to the Dps family. As to quaternary structure, the 12 subunits form a hollow sphere into which the mineral iron core of up to 500 Fe(3+) can be deposited. Homododecamer.

It is found in the cytoplasm. It catalyses the reaction 2 Fe(2+) + H2O2 + 2 H(+) = 2 Fe(3+) + 2 H2O. Protects DNA from oxidative damage by sequestering intracellular Fe(2+) ion and storing it in the form of Fe(3+) oxyhydroxide mineral. One hydrogen peroxide oxidizes two Fe(2+) ions, which prevents hydroxyl radical production by the Fenton reaction. It is capable of binding and sequestering Fe(2+) ion. Does not bind DNA. The polypeptide is DNA protection during starvation protein 2 (dps2) (Bacillus anthracis).